The chain runs to 162 residues: Ribose-5-phosphate isomerase B (162 aa).

Residues aspartate 11–histidine 12 and glycine 70–glycine 74 each bind D-ribulose 5-phosphate. Glutamate 75 (proton acceptor) is an active-site residue. Histidine 102 functions as the Proton donor in the catalytic mechanism. Residues asparagine 103, arginine 113, arginine 137, and arginine 141 each coordinate D-ribulose 5-phosphate.

It belongs to the LacAB/RpiB family. In terms of assembly, homodimer.

The enzyme catalyses aldehydo-D-ribose 5-phosphate = D-ribulose 5-phosphate. It functions in the pathway carbohydrate degradation; pentose phosphate pathway; D-ribose 5-phosphate from D-ribulose 5-phosphate (non-oxidative stage): step 1/1. In terms of biological role, catalyzes the interconversion of ribulose-5-P and ribose-5-P. The chain is Ribose-5-phosphate isomerase B from Mycobacterium bovis (strain ATCC BAA-935 / AF2122/97).